The chain runs to 174 residues: Adipose-secreted signaling protein (174 aa).

Residue alanine 2 is modified to N-acetylalanine. The residue at position 147 (threonine 147) is a Phosphothreonine.

The protein belongs to the ADISSP family.

It localises to the secreted. Adipocyte-secreted protein (adipokine) that acts as a key regulator for white adipose tissue (WAT) thermogenesis and glucose homeostasis at least in part through activation of protein kinase A (PKA). The sequence is that of Adipose-secreted signaling protein from Homo sapiens (Human).